Consider the following 216-residue polypeptide: Cytochrome c oxidase subunit 2 (216 aa).

At 1–8 (LGLQNATS) the chain is on the mitochondrial intermembrane side. A helical membrane pass occupies residues 9-39 (PIMEELIAFHDHALMIIFLISSLVLYIISLM). At 40–53 (LTTKLTHTSTMNAQ) the chain is on the mitochondrial matrix side. Residues 54–81 (EIEMIWTILPAVILIMIALPSLRILYMT) traverse the membrane as a helical segment. Over 82–216 (DEFNKPYLTL…FIYFQDFEVW (135 aa)) the chain is Mitochondrial intermembrane. The Cu cation site is built by H155, C190, E192, C194, H198, and M201. E192 is a binding site for Mg(2+).

It belongs to the cytochrome c oxidase subunit 2 family. In terms of assembly, component of the cytochrome c oxidase (complex IV, CIV), a multisubunit enzyme composed of 14 subunits. The complex is composed of a catalytic core of 3 subunits MT-CO1, MT-CO2 and MT-CO3, encoded in the mitochondrial DNA, and 11 supernumerary subunits COX4I, COX5A, COX5B, COX6A, COX6B, COX6C, COX7A, COX7B, COX7C, COX8 and NDUFA4, which are encoded in the nuclear genome. The complex exists as a monomer or a dimer and forms supercomplexes (SCs) in the inner mitochondrial membrane with NADH-ubiquinone oxidoreductase (complex I, CI) and ubiquinol-cytochrome c oxidoreductase (cytochrome b-c1 complex, complex III, CIII), resulting in different assemblies (supercomplex SCI(1)III(2)IV(1) and megacomplex MCI(2)III(2)IV(2)). Found in a complex with TMEM177, COA6, COX18, COX20, SCO1 and SCO2. Interacts with TMEM177 in a COX20-dependent manner. Interacts with COX20. Interacts with COX16. Cu cation is required as a cofactor.

Its subcellular location is the mitochondrion inner membrane. The enzyme catalyses 4 Fe(II)-[cytochrome c] + O2 + 8 H(+)(in) = 4 Fe(III)-[cytochrome c] + 2 H2O + 4 H(+)(out). Component of the cytochrome c oxidase, the last enzyme in the mitochondrial electron transport chain which drives oxidative phosphorylation. The respiratory chain contains 3 multisubunit complexes succinate dehydrogenase (complex II, CII), ubiquinol-cytochrome c oxidoreductase (cytochrome b-c1 complex, complex III, CIII) and cytochrome c oxidase (complex IV, CIV), that cooperate to transfer electrons derived from NADH and succinate to molecular oxygen, creating an electrochemical gradient over the inner membrane that drives transmembrane transport and the ATP synthase. Cytochrome c oxidase is the component of the respiratory chain that catalyzes the reduction of oxygen to water. Electrons originating from reduced cytochrome c in the intermembrane space (IMS) are transferred via the dinuclear copper A center (CU(A)) of subunit 2 and heme A of subunit 1 to the active site in subunit 1, a binuclear center (BNC) formed by heme A3 and copper B (CU(B)). The BNC reduces molecular oxygen to 2 water molecules using 4 electrons from cytochrome c in the IMS and 4 protons from the mitochondrial matrix. The sequence is that of Cytochrome c oxidase subunit 2 (MT-CO2) from Callimico goeldii (Goeldi's marmoset).